Reading from the N-terminus, the 161-residue chain is ATP synthase subunit b 1 (161 aa).

The helical transmembrane segment at 5–25 (EFWVAVAFVIFCGIVWKAGGF) threads the bilayer.

The protein belongs to the ATPase B chain family. As to quaternary structure, F-type ATPases have 2 components, F(1) - the catalytic core - and F(0) - the membrane proton channel. F(1) has five subunits: alpha(3), beta(3), gamma(1), delta(1), epsilon(1). F(0) has three main subunits: a(1), b(2) and c(10-14). The alpha and beta chains form an alternating ring which encloses part of the gamma chain. F(1) is attached to F(0) by a central stalk formed by the gamma and epsilon chains, while a peripheral stalk is formed by the delta and b chains.

The protein localises to the cell inner membrane. Its function is as follows. F(1)F(0) ATP synthase produces ATP from ADP in the presence of a proton or sodium gradient. F-type ATPases consist of two structural domains, F(1) containing the extramembraneous catalytic core and F(0) containing the membrane proton channel, linked together by a central stalk and a peripheral stalk. During catalysis, ATP synthesis in the catalytic domain of F(1) is coupled via a rotary mechanism of the central stalk subunits to proton translocation. Functionally, component of the F(0) channel, it forms part of the peripheral stalk, linking F(1) to F(0). The sequence is that of ATP synthase subunit b 1 from Methylobacterium sp. (strain 4-46).